Consider the following 471-residue polypeptide: Ribulose bisphosphate carboxylase large chain (471 aa).

Residue Lys-5 is modified to N6,N6,N6-trimethyllysine. Substrate contacts are provided by Asn-114 and Thr-164. Lys-166 functions as the Proton acceptor in the catalytic mechanism. Lys-168 is a binding site for substrate. Mg(2+)-binding residues include Lys-192, Asp-194, and Glu-195. The residue at position 192 (Lys-192) is an N6-carboxylysine. The active-site Proton acceptor is His-285. Substrate contacts are provided by Arg-286, His-318, and Ser-370.

This sequence belongs to the RuBisCO large chain family. Type I subfamily. Heterohexadecamer of 8 large chains and 8 small chains; disulfide-linked. The disulfide link is formed within the large subunit homodimers. Mg(2+) is required as a cofactor. The disulfide bond which can form in the large chain dimeric partners within the hexadecamer appears to be associated with oxidative stress and protein turnover.

It is found in the plastid. The protein localises to the chloroplast. The enzyme catalyses 2 (2R)-3-phosphoglycerate + 2 H(+) = D-ribulose 1,5-bisphosphate + CO2 + H2O. The catalysed reaction is D-ribulose 1,5-bisphosphate + O2 = 2-phosphoglycolate + (2R)-3-phosphoglycerate + 2 H(+). Functionally, ruBisCO catalyzes two reactions: the carboxylation of D-ribulose 1,5-bisphosphate, the primary event in carbon dioxide fixation, as well as the oxidative fragmentation of the pentose substrate in the photorespiration process. Both reactions occur simultaneously and in competition at the same active site. The sequence is that of Ribulose bisphosphate carboxylase large chain from Anthocleista grandiflora (Forest fever tree).